A 400-amino-acid polypeptide reads, in one-letter code: Queuine tRNA-ribosyltransferase (400 aa).

Catalysis depends on D93, which acts as the Proton acceptor. Residues 93–97 (DSGGF), D166, and G247 contribute to the substrate site. Residues 277–283 (GIGDVDD) form an RNA binding region. Catalysis depends on D296, which acts as the Nucleophile. The tract at residues 301–305 (TRLGR) is RNA binding; important for wobble base 34 recognition. Residues C338, C340, C343, and H369 each coordinate Zn(2+).

It belongs to the queuine tRNA-ribosyltransferase family. As to quaternary structure, homodimer. Within each dimer, one monomer is responsible for RNA recognition and catalysis, while the other monomer binds to the replacement base PreQ1. Requires Zn(2+) as cofactor.

It catalyses the reaction 7-aminomethyl-7-carbaguanine + guanosine(34) in tRNA = 7-aminomethyl-7-carbaguanosine(34) in tRNA + guanine. It functions in the pathway tRNA modification; tRNA-queuosine biosynthesis. Catalyzes the base-exchange of a guanine (G) residue with the queuine precursor 7-aminomethyl-7-deazaguanine (PreQ1) at position 34 (anticodon wobble position) in tRNAs with GU(N) anticodons (tRNA-Asp, -Asn, -His and -Tyr). Catalysis occurs through a double-displacement mechanism. The nucleophile active site attacks the C1' of nucleotide 34 to detach the guanine base from the RNA, forming a covalent enzyme-RNA intermediate. The proton acceptor active site deprotonates the incoming PreQ1, allowing a nucleophilic attack on the C1' of the ribose to form the product. After dissociation, two additional enzymatic reactions on the tRNA convert PreQ1 to queuine (Q), resulting in the hypermodified nucleoside queuosine (7-(((4,5-cis-dihydroxy-2-cyclopenten-1-yl)amino)methyl)-7-deazaguanosine). The protein is Queuine tRNA-ribosyltransferase of Roseiflexus sp. (strain RS-1).